A 136-amino-acid chain; its full sequence is Aspartate 1-decarboxylase (136 aa).

Ser25 (schiff-base intermediate with substrate; via pyruvic acid) is an active-site residue. A Pyruvic acid (Ser) modification is found at Ser25. Thr57 contacts substrate. Catalysis depends on Tyr58, which acts as the Proton donor. 73–75 contributes to the substrate binding site; sequence GAA. Residues 117-136 are disordered; sequence IFQLGEETTPEEAPSLEQRN.

The protein belongs to the PanD family. In terms of assembly, heterooctamer of four alpha and four beta subunits. Pyruvate is required as a cofactor. Post-translationally, is synthesized initially as an inactive proenzyme, which is activated by self-cleavage at a specific serine bond to produce a beta-subunit with a hydroxyl group at its C-terminus and an alpha-subunit with a pyruvoyl group at its N-terminus.

The protein resides in the cytoplasm. It catalyses the reaction L-aspartate + H(+) = beta-alanine + CO2. It functions in the pathway cofactor biosynthesis; (R)-pantothenate biosynthesis; beta-alanine from L-aspartate: step 1/1. Functionally, catalyzes the pyruvoyl-dependent decarboxylation of aspartate to produce beta-alanine. In Chloroherpeton thalassium (strain ATCC 35110 / GB-78), this protein is Aspartate 1-decarboxylase.